A 513-amino-acid polypeptide reads, in one-letter code: Ribonuclease Y (513 aa).

Residues 6-26 form a helical membrane-spanning segment; that stretch reads YIIIAVVIIIICVILGLYIVD. Positions 203–288 constitute a KH domain; sequence TVHVVNLPND…EMVEKAKKEV (86 aa). Residues 329-422 enclose the HD domain; the sequence is VLKHSIEVSH…VQAADAISAA (94 aa).

The protein belongs to the RNase Y family.

The protein resides in the cell membrane. In terms of biological role, endoribonuclease that initiates mRNA decay. The sequence is that of Ribonuclease Y from Clostridium botulinum (strain ATCC 19397 / Type A).